Consider the following 359-residue polypeptide: UDP-N-acetylglucosamine--N-acetylmuramyl-(pentapeptide) pyrophosphoryl-undecaprenol N-acetylglucosamine transferase (359 aa).

Residues 12-14 (TGG), Asn124, Arg163, Ser191, Ile245, 264-269 (ALTVAE), and Gln290 each bind UDP-N-acetyl-alpha-D-glucosamine.

It belongs to the glycosyltransferase 28 family. MurG subfamily.

The protein localises to the cell inner membrane. It catalyses the reaction di-trans,octa-cis-undecaprenyl diphospho-N-acetyl-alpha-D-muramoyl-L-alanyl-D-glutamyl-meso-2,6-diaminopimeloyl-D-alanyl-D-alanine + UDP-N-acetyl-alpha-D-glucosamine = di-trans,octa-cis-undecaprenyl diphospho-[N-acetyl-alpha-D-glucosaminyl-(1-&gt;4)]-N-acetyl-alpha-D-muramoyl-L-alanyl-D-glutamyl-meso-2,6-diaminopimeloyl-D-alanyl-D-alanine + UDP + H(+). Its pathway is cell wall biogenesis; peptidoglycan biosynthesis. In terms of biological role, cell wall formation. Catalyzes the transfer of a GlcNAc subunit on undecaprenyl-pyrophosphoryl-MurNAc-pentapeptide (lipid intermediate I) to form undecaprenyl-pyrophosphoryl-MurNAc-(pentapeptide)GlcNAc (lipid intermediate II). This chain is UDP-N-acetylglucosamine--N-acetylmuramyl-(pentapeptide) pyrophosphoryl-undecaprenol N-acetylglucosamine transferase, found in Nitrosococcus oceani (strain ATCC 19707 / BCRC 17464 / JCM 30415 / NCIMB 11848 / C-107).